Reading from the N-terminus, the 367-residue chain is Alginate lyase (367 aa).

An N-terminal signal peptide occupies residues 1 to 27 (MKTSHLIRIALPGALAAALLASQVSQA). Residues 65–66 (SK), 138–139 (HT), and Y256 each bind substrate.

The protein belongs to the polysaccharide lyase 5 family.

Its subcellular location is the periplasm. The enzyme catalyses Eliminative cleavage of alginate to give oligosaccharides with 4-deoxy-alpha-L-erythro-hex-4-enuronosyl groups at their non-reducing ends and beta-D-mannuronate at their reducing end.. Functionally, catalyzes the depolymerization of alginate by cleaving the beta-1,4 glycosidic bond between two adjacent sugar residues via a beta-elimination mechanism. May serve to degrade mislocalized alginate that is trapped in the periplasmic space. The polypeptide is Alginate lyase (Pseudomonas aeruginosa (strain LESB58)).